The chain runs to 416 residues: Floricaula/leafy homolog 2 (416 aa).

A disordered region spans residues 154 to 237 (EGLSEEPVQQ…DASGGISERQ (84 aa)). Residues 210–225 (AEEDEETEEGQEDDWN) show a composition bias toward acidic residues. DNA-binding regions lie at residues 238 to 242 (REHPF), 307 to 314 (NKPKMRHY), and 378 to 381 (YVPT).

The protein belongs to the FLO/LFY family. As to expression, expressed in floral meristems and in indeterminate vegetative meristems.

It is found in the nucleus. Functionally, probable transcription factor that act to specify determinacy in the progenitor cells for both flowers and leaves. In Nicotiana tabacum (Common tobacco), this protein is Floricaula/leafy homolog 2 (FL2).